A 457-amino-acid polypeptide reads, in one-letter code: MQKYIVEARSLLALAIPVVIAQLSQTAMGVVDTIMAGSVSATDMAAVAVGTSIWLPAILFGHGLLLALTPTVAQLNGSGRRSQIAHQVRQGFWLALCVSVLIMLVLYNSDHVIKQMDNIDPVLAQKAVGFLHAIMWGVPGYLFFQVLRNQCEGLSKTKPGMVIGFVGLLVNIPINYIFIYGKFGAPALGGVGCGVATASVYWVMFLMMRWYVTRARSQQDIKLEKGFAAPDWQVMKRLSGLGLPVALALFFEVTLFAVVALLVSPLGIVAVAGHQIALNFSSLMFMLPMSLSVAATIRVGFRLGQGAVEQAQVAAYTSMAVGLLLASVTAVFTIVFREHIALLYNKTPEVVTMASHLMLLAALYQLSDAVQVIGSGVLRGYKDTRSIFFITFTAYWLLGLPSGYLLGLTDYILPAMGPAGFWIGFIIGLTAAAILMVLRIRWLQKQPTAFILQRAAH.

Helical transmembrane passes span 11–31, 46–66, 93–113, 127–147, 160–180, 188–208, 243–263, 283–301, 316–336, 357–377, 387–407, and 418–438; these read LLAL…MGVV, AVAV…GLLL, WLAL…DHVI, AVGF…FQVL, GMVI…IFIY, LGGV…FLMM, LPVA…ALLV, LMFM…RVGF, YTSM…TIVF, LMLL…GSGV, IFFI…YLLG, and PAGF…LMVL.

The protein belongs to the multi antimicrobial extrusion (MATE) (TC 2.A.66.1) family. MdtK subfamily.

Its subcellular location is the cell inner membrane. Functionally, multidrug efflux pump that functions probably as a Na(+)/drug antiporter. In Yersinia pseudotuberculosis serotype IB (strain PB1/+), this protein is Multidrug resistance protein MdtK.